An 89-amino-acid chain; its full sequence is Small ribosomal subunit protein uS14 (89 aa).

It belongs to the universal ribosomal protein uS14 family. Part of the 30S ribosomal subunit. Contacts proteins S3 and S10.

Its function is as follows. Binds 16S rRNA, required for the assembly of 30S particles and may also be responsible for determining the conformation of the 16S rRNA at the A site. This chain is Small ribosomal subunit protein uS14, found in Lacticaseibacillus casei (strain BL23) (Lactobacillus casei).